A 199-amino-acid chain; its full sequence is Recombination protein RecR (199 aa).

A C4-type zinc finger spans residues 57–72; the sequence is CQQCRTFTEQNLCAIC. In terms of domain architecture, Toprim spans 81–176; it reads GMICVVEMPV…KVSRIAHGVP (96 aa).

This sequence belongs to the RecR family.

Functionally, may play a role in DNA repair. It seems to be involved in an RecBC-independent recombinational process of DNA repair. It may act with RecF and RecO. The polypeptide is Recombination protein RecR (Psychromonas ingrahamii (strain DSM 17664 / CCUG 51855 / 37)).